Consider the following 281-residue polypeptide: 2-dehydro-3-deoxyphosphooctonate aldolase (281 aa).

It belongs to the KdsA family.

The protein localises to the cytoplasm. It catalyses the reaction D-arabinose 5-phosphate + phosphoenolpyruvate + H2O = 3-deoxy-alpha-D-manno-2-octulosonate-8-phosphate + phosphate. Its pathway is carbohydrate biosynthesis; 3-deoxy-D-manno-octulosonate biosynthesis; 3-deoxy-D-manno-octulosonate from D-ribulose 5-phosphate: step 2/3. The protein operates within bacterial outer membrane biogenesis; lipopolysaccharide biosynthesis. This chain is 2-dehydro-3-deoxyphosphooctonate aldolase, found in Pseudomonas putida (strain GB-1).